A 96-amino-acid polypeptide reads, in one-letter code: uncharacterized protein (96 aa).

In terms of domain architecture, CBS spans 57 to 96 (MTKKVRTTKKDASISDAAALMDKHNVNRLPVVDENNKLVL).

This is an uncharacterized protein from Methanobacterium ivanovii.